A 269-amino-acid polypeptide reads, in one-letter code: Type III pantothenate kinase (269 aa).

9–16 lines the ATP pocket; it reads DVGNTSVK. Residues Tyr-106 and 113-116 contribute to the substrate site; that span reads GADR. The Proton acceptor role is filled by Asp-115. Residue Asp-137 participates in K(+) binding. Thr-140 contacts ATP. Thr-193 provides a ligand contact to substrate.

This sequence belongs to the type III pantothenate kinase family. In terms of assembly, homodimer. NH4(+) serves as cofactor. K(+) is required as a cofactor.

The protein resides in the cytoplasm. It catalyses the reaction (R)-pantothenate + ATP = (R)-4'-phosphopantothenate + ADP + H(+). The protein operates within cofactor biosynthesis; coenzyme A biosynthesis; CoA from (R)-pantothenate: step 1/5. Catalyzes the phosphorylation of pantothenate (Pan), the first step in CoA biosynthesis. The polypeptide is Type III pantothenate kinase (Lawsonia intracellularis (strain PHE/MN1-00)).